The primary structure comprises 169 residues: Small ribosomal subunit protein uS5 (169 aa).

Residues Met14–Val77 enclose the S5 DRBM domain.

Belongs to the universal ribosomal protein uS5 family. As to quaternary structure, part of the 30S ribosomal subunit. Contacts proteins S4 and S8.

Its function is as follows. With S4 and S12 plays an important role in translational accuracy. In terms of biological role, located at the back of the 30S subunit body where it stabilizes the conformation of the head with respect to the body. The sequence is that of Small ribosomal subunit protein uS5 from Alkaliphilus metalliredigens (strain QYMF).